Reading from the N-terminus, the 572-residue chain is Chaperonin CPN60-like 2, mitochondrial (572 aa).

The transit peptide at 1–31 directs the protein to the mitochondrion; sequence MYRVLSKLSSSIGSSTSRKLVSGRIISSRNY.

The protein belongs to the chaperonin (HSP60) family.

Its subcellular location is the mitochondrion. In terms of biological role, implicated in mitochondrial protein import and macromolecular assembly. May facilitate the correct folding of imported proteins. May also prevent misfolding and promote the refolding and proper assembly of unfolded polypeptides generated under stress conditions in the mitochondrial matrix. This is Chaperonin CPN60-like 2, mitochondrial from Arabidopsis thaliana (Mouse-ear cress).